The following is a 256-amino-acid chain: 6-phosphogluconolactonase (256 aa).

This sequence belongs to the glucosamine/galactosamine-6-phosphate isomerase family. 6-phosphogluconolactonase subfamily.

It carries out the reaction 6-phospho-D-glucono-1,5-lactone + H2O = 6-phospho-D-gluconate + H(+). The protein operates within carbohydrate degradation; pentose phosphate pathway; D-ribulose 5-phosphate from D-glucose 6-phosphate (oxidative stage): step 2/3. In terms of biological role, hydrolysis of 6-phosphogluconolactone to 6-phosphogluconate. The chain is 6-phosphogluconolactonase (pgl) from Chlamydia trachomatis serovar D (strain ATCC VR-885 / DSM 19411 / UW-3/Cx).